The sequence spans 461 residues: Ribitol-5-phosphate transferase FKTN (461 aa).

At 1–7 (MSRINKN) the chain is on the cytoplasmic side. The required and sufficient for interaction with POMGNT1 stretch occupies residues 6 to 27 (KNVVLALLTLTSSAFLLFQLYY). Residues 8–28 (VVLALLTLTSSAFLLFQLYYY) form a helical; Signal-anchor for type II membrane protein membrane-spanning segment. At 29–461 (KHYLSTKNGA…SEWDEVIQLY (433 aa)) the chain is on the lumenal side. Residue Asn92 is glycosylated (N-linked (GlcNAc...) asparagine).

This sequence belongs to the LicD transferase family. In terms of assembly, forms a complex composed of FKTN/fukutin, FKRP and RXYLT1/TMEM5. Interacts (via transmembrane domain) with POMGNT1; the interaction is direct and is required for normal POMGNT1 location in Golgi membranes. Expressed in the retina (at protein level). Widely expressed with highest expression in brain, heart, pancreas and skeletal muscle. Expressed at similar levels in control fetal and adult brain. Expressed in migrating neurons, including Cajar-Retzius cells and adult cortical neurons, as well as hippocampal pyramidal cells and cerebellar Purkinje cells. No expression observed in the glia limitans, the subpial astrocytes (which contribute to basement membrane formation) or other glial cells.

The protein localises to the golgi apparatus membrane. It localises to the cytoplasm. The protein resides in the nucleus. The enzyme catalyses 3-O-[beta-D-GalNAc-(1-&gt;3)-beta-D-GlcNAc-(1-&gt;4)-(O-6-P-alpha-D-Man)]-Thr-[protein] + CDP-L-ribitol = 3-O-[Rib-ol-P-3-beta-D-GalNAc-(1-&gt;3)-beta-D-GlcNAc-(1-&gt;4)-(O-6-P-alpha-D-Man)]-Thr-[protein] + CMP + H(+). It functions in the pathway protein modification; protein glycosylation. Catalyzes the transfer of a ribitol-phosphate from CDP-ribitol to the distal N-acetylgalactosamine of the phosphorylated O-mannosyl trisaccharide (N-acetylgalactosamine-beta-3-N-acetylglucosamine-beta-4-(phosphate-6-)mannose), a carbohydrate structure present in alpha-dystroglycan (DAG1). This constitutes the first step in the formation of the ribitol 5-phosphate tandem repeat which links the phosphorylated O-mannosyl trisaccharide to the ligand binding moiety composed of repeats of 3-xylosyl-alpha-1,3-glucuronic acid-beta-1. Required for normal location of POMGNT1 in Golgi membranes, and for normal POMGNT1 activity. May interact with and reinforce a large complex encompassing the outside and inside of muscle membranes. Could be involved in brain development. The chain is Ribitol-5-phosphate transferase FKTN from Homo sapiens (Human).